Reading from the N-terminus, the 591-residue chain is Fanconi anemia group C protein homolog (591 aa).

In terms of assembly, belongs to the multisubunit FA complex composed of FANCA, FANCB, FANCC, FANCE, FANCF, FANCG, FANCL/PHF9 and FANCM. This complex may also include HSP70. Interacts with ZBTB32. Upon IFNG induction, interacts with STAT1. Interacts with CDK1. Interacts with EIF2AK2. In terms of tissue distribution, ubiquitous.

The protein localises to the nucleus. It localises to the cytoplasm. Its function is as follows. DNA repair protein that may operate in a postreplication repair or a cell cycle checkpoint function. May be implicated in interstrand DNA cross-link repair and in the maintenance of normal chromosome stability. Upon IFNG induction, may facilitate STAT1 activation by recruiting STAT1 to IFNGR1. The protein is Fanconi anemia group C protein homolog (Fancc) of Mus musculus (Mouse).